The sequence spans 237 residues: ATP synthase subunit 4, mitochondrial (237 aa).

A mitochondrion-targeting transit peptide spans 1-30 (MFRALTLKASARPVVAGLCSRQAPIAAVRY).

It belongs to the eukaryotic ATPase B chain family.

It is found in the mitochondrion. The protein resides in the mitochondrion inner membrane. In terms of biological role, mitochondrial membrane ATP synthase (F(1)F(0) ATP synthase or Complex V) produces ATP from ADP in the presence of a proton gradient across the membrane which is generated by electron transport complexes of the respiratory chain. F-type ATPases consist of two structural domains, F(1) - containing the extramembraneous catalytic core, and F(0) - containing the membrane proton channel, linked together by a central stalk and a peripheral stalk. During catalysis, ATP synthesis in the catalytic domain of F(1) is coupled via a rotary mechanism of the central stalk subunits to proton translocation. Part of the complex F(0) domain and the peripheric stalk, which acts as a stator to hold the catalytic alpha(3)beta(3) subcomplex and subunit a/ATP6 static relative to the rotary elements. The polypeptide is ATP synthase subunit 4, mitochondrial (ATP4) (Kluyveromyces lactis (strain ATCC 8585 / CBS 2359 / DSM 70799 / NBRC 1267 / NRRL Y-1140 / WM37) (Yeast)).